Reading from the N-terminus, the 176-residue chain is ATP-dependent protease subunit HslV (176 aa).

Threonine 2 is an active-site residue. Na(+) is bound by residues glycine 157, cysteine 160, and threonine 163.

This sequence belongs to the peptidase T1B family. HslV subfamily. In terms of assembly, a double ring-shaped homohexamer of HslV is capped on each side by a ring-shaped HslU homohexamer. The assembly of the HslU/HslV complex is dependent on binding of ATP.

The protein localises to the cytoplasm. The catalysed reaction is ATP-dependent cleavage of peptide bonds with broad specificity.. Its activity is regulated as follows. Allosterically activated by HslU binding. Protease subunit of a proteasome-like degradation complex believed to be a general protein degrading machinery. The polypeptide is ATP-dependent protease subunit HslV (Pseudomonas putida (strain ATCC 47054 / DSM 6125 / CFBP 8728 / NCIMB 11950 / KT2440)).